We begin with the raw amino-acid sequence, 518 residues long: Cytochrome P450 3A27 (518 aa).

Heme is bound at residue C447.

The protein belongs to the cytochrome P450 family. The cofactor is heme.

The protein localises to the endoplasmic reticulum membrane. The protein resides in the microsome membrane. It catalyses the reaction an organic molecule + reduced [NADPH--hemoprotein reductase] + O2 = an alcohol + oxidized [NADPH--hemoprotein reductase] + H2O + H(+). Functionally, cytochromes P450 are a group of heme-thiolate monooxygenases. In liver microsomes, this enzyme is involved in an NADPH-dependent electron transport pathway. It oxidizes a variety of structurally unrelated compounds, including steroids, fatty acids, and xenobiotics. The sequence is that of Cytochrome P450 3A27 (cyp3a27) from Oncorhynchus mykiss (Rainbow trout).